We begin with the raw amino-acid sequence, 211 residues long: Putative transposase for insertion sequence element IS402 (211 aa).

The segment at 51 to 71 (RRWGRPKTGPNPTDRARPGSK) is disordered.

It belongs to the transposase 11 family.

Its function is as follows. Involved in the transposition of the insertion sequence. The chain is Putative transposase for insertion sequence element IS402 from Burkholderia cepacia (Pseudomonas cepacia).